Consider the following 309-residue polypeptide: Beta-ketoacyl-[acyl-carrier-protein] synthase III (309 aa).

Catalysis depends on residues Cys111 and His236. The tract at residues 237–241 is ACP-binding; the sequence is QANVR. Residue Asn266 is part of the active site.

This sequence belongs to the thiolase-like superfamily. FabH family. Homodimer.

It localises to the cytoplasm. It catalyses the reaction malonyl-[ACP] + acetyl-CoA + H(+) = 3-oxobutanoyl-[ACP] + CO2 + CoA. Its pathway is lipid metabolism; fatty acid biosynthesis. Its function is as follows. Catalyzes the condensation reaction of fatty acid synthesis by the addition to an acyl acceptor of two carbons from malonyl-ACP. Catalyzes the first condensation reaction which initiates fatty acid synthesis and may therefore play a role in governing the total rate of fatty acid production. Possesses both acetoacetyl-ACP synthase and acetyl transacylase activities. Its substrate specificity determines the biosynthesis of branched-chain and/or straight-chain of fatty acids. This is Beta-ketoacyl-[acyl-carrier-protein] synthase III from Aquifex aeolicus (strain VF5).